A 236-amino-acid chain; its full sequence is tRNA1(Val) (adenine(37)-N6)-methyltransferase (236 aa).

Belongs to the methyltransferase superfamily. tRNA (adenine-N(6)-)-methyltransferase family.

The protein localises to the cytoplasm. It carries out the reaction adenosine(37) in tRNA1(Val) + S-adenosyl-L-methionine = N(6)-methyladenosine(37) in tRNA1(Val) + S-adenosyl-L-homocysteine + H(+). Specifically methylates the adenine in position 37 of tRNA(1)(Val) (anticodon cmo5UAC). This Aeromonas salmonicida (strain A449) protein is tRNA1(Val) (adenine(37)-N6)-methyltransferase.